Here is a 318-residue protein sequence, read N- to C-terminus: Pantothenate kinase (318 aa).

Position 96 to 103 (G96 to S103) interacts with ATP.

Belongs to the prokaryotic pantothenate kinase family.

It is found in the cytoplasm. It catalyses the reaction (R)-pantothenate + ATP = (R)-4'-phosphopantothenate + ADP + H(+). The protein operates within cofactor biosynthesis; coenzyme A biosynthesis; CoA from (R)-pantothenate: step 1/5. The chain is Pantothenate kinase from Nitrobacter hamburgensis (strain DSM 10229 / NCIMB 13809 / X14).